The sequence spans 449 residues: Exodeoxyribonuclease 7 large subunit (449 aa).

Belongs to the XseA family. Heterooligomer composed of large and small subunits.

Its subcellular location is the cytoplasm. It catalyses the reaction Exonucleolytic cleavage in either 5'- to 3'- or 3'- to 5'-direction to yield nucleoside 5'-phosphates.. Its function is as follows. Bidirectionally degrades single-stranded DNA into large acid-insoluble oligonucleotides, which are then degraded further into small acid-soluble oligonucleotides. In Salmonella agona (strain SL483), this protein is Exodeoxyribonuclease 7 large subunit.